We begin with the raw amino-acid sequence, 370 residues long: tRNA 2-selenouridine synthase (370 aa).

The Rhodanese domain maps to 12–136; it reads FLDDVPMMDM…MRTFLLETTQ (125 aa). Residue C95 is the S-selanylcysteine intermediate of the active site.

This sequence belongs to the SelU family. As to quaternary structure, monomer.

It catalyses the reaction 5-methylaminomethyl-2-thiouridine(34) in tRNA + selenophosphate + (2E)-geranyl diphosphate + H2O + H(+) = 5-methylaminomethyl-2-selenouridine(34) in tRNA + (2E)-thiogeraniol + phosphate + diphosphate. The catalysed reaction is 5-methylaminomethyl-2-thiouridine(34) in tRNA + (2E)-geranyl diphosphate = 5-methylaminomethyl-S-(2E)-geranyl-thiouridine(34) in tRNA + diphosphate. It carries out the reaction 5-methylaminomethyl-S-(2E)-geranyl-thiouridine(34) in tRNA + selenophosphate + H(+) = 5-methylaminomethyl-2-(Se-phospho)selenouridine(34) in tRNA + (2E)-thiogeraniol. The enzyme catalyses 5-methylaminomethyl-2-(Se-phospho)selenouridine(34) in tRNA + H2O = 5-methylaminomethyl-2-selenouridine(34) in tRNA + phosphate. In terms of biological role, involved in the post-transcriptional modification of the uridine at the wobble position (U34) of tRNA(Lys), tRNA(Glu) and tRNA(Gln). Catalyzes the conversion of 2-thiouridine (S2U-RNA) to 2-selenouridine (Se2U-RNA). Acts in a two-step process involving geranylation of 2-thiouridine (S2U) to S-geranyl-2-thiouridine (geS2U) and subsequent selenation of the latter derivative to 2-selenouridine (Se2U) in the tRNA chain. This chain is tRNA 2-selenouridine synthase, found in Pseudomonas putida (strain ATCC 47054 / DSM 6125 / CFBP 8728 / NCIMB 11950 / KT2440).